The sequence spans 1099 residues: 1-phosphatidylinositol 4,5-bisphosphate phosphodiesterase 1 (1099 aa).

Residues 1–10 (MLESLNRRNS) are compositionally biased toward basic and acidic residues. Disordered stretches follow at residues 1 to 109 (MLES…SSTT) and 128 to 164 (ESRS…KSIQ). 2 stretches are compositionally biased toward low complexity: residues 43-66 (PPKS…KSDL) and 86-109 (PKQQ…SSTT). Polar residues predominate over residues 131–141 (SIVSNNGGSPM). Low complexity predominate over residues 142–155 (SDSTTVTSTLSTDT). The region spanning 566 to 726 (YDYPLNEYFI…LKHKFIIKVK (161 aa)) is the PI-PLC X-box domain. Residues H579 and H642 contribute to the active site. Substrate contacts are provided by K724 and K726. Residues 742 to 780 (FTTSTTTTTTTTTTTTTATSLSEDNENNKSNSSSTSSFI) form a disordered region. Residues 743–778 (TTSTTTTTTTTTTTTTATSLSEDNENNKSNSSSTSS) show a composition bias toward low complexity. Positions 794–912 (ELSNLGIYTQ…GYVLKPSVLR (119 aa)) constitute a PI-PLC Y-box domain. Residues S823 and R852 each coordinate substrate. Residues 917-1071 (KSSSSNVDTR…QGYRYIYLND (155 aa)) enclose the C2 domain.

It catalyses the reaction a 1,2-diacyl-sn-glycero-3-phospho-(1D-myo-inositol-4,5-bisphosphate) + H2O = 1D-myo-inositol 1,4,5-trisphosphate + a 1,2-diacyl-sn-glycerol + H(+). The production of the second messenger molecules diacylglycerol (DAG) and inositol 1,4,5-trisphosphate (IP3) is mediated by activated phosphatidylinositol-specific phospholipase C enzymes. This Candida albicans (Yeast) protein is 1-phosphatidylinositol 4,5-bisphosphate phosphodiesterase 1 (PLC1).